Reading from the N-terminus, the 304-residue chain is MPVQVLNRLPAIKILQNEDVFVMQKSRNTFKEQSSLKVLILNLMPKKIETENQLLRLLSNSPLQIDIQLLRIDGHIPKNTPVEHLNNFYCSFPDIRYKNFDGLIVTGAPLGLINFENITFWPQIEQLFLWAKEHINSILFICWAVQAALKVLYNLPKFTRKRKLVGIYQHNTINSHALLTKGFDEKFLAPHSRYSDFPKDIIYRNTDLEILAESDEAGAYLLMSQDKRLIFITGHPEYDAMTLSQEYYRDLKLGLSPKLPDHYFPQDNPNLVPKISWRSHAYLLFANWLNYYVQQNVIKHLSSF.

The Acyl-thioester intermediate role is filled by Cys142. Substrate-binding residues include Lys163 and Ser192. His235 (proton acceptor) is an active-site residue. Glu237 is a catalytic residue. Arg249 contacts substrate.

This sequence belongs to the MetA family.

The protein resides in the cytoplasm. It catalyses the reaction L-homoserine + succinyl-CoA = O-succinyl-L-homoserine + CoA. The protein operates within amino-acid biosynthesis; L-methionine biosynthesis via de novo pathway; O-succinyl-L-homoserine from L-homoserine: step 1/1. Functionally, transfers a succinyl group from succinyl-CoA to L-homoserine, forming succinyl-L-homoserine. This Blochmanniella pennsylvanica (strain BPEN) protein is Homoserine O-succinyltransferase.